We begin with the raw amino-acid sequence, 534 residues long: Chaperonin GroEL (534 aa).

Residues 29–32 (TAGP), 86–90 (DGTTT), G413, and D494 contribute to the ATP site.

This sequence belongs to the chaperonin (HSP60) family. As to quaternary structure, forms a cylinder of 14 subunits composed of two heptameric rings stacked back-to-back. Interacts with the co-chaperonin GroES.

The protein resides in the cytoplasm. It catalyses the reaction ATP + H2O + a folded polypeptide = ADP + phosphate + an unfolded polypeptide.. Together with its co-chaperonin GroES, plays an essential role in assisting protein folding. The GroEL-GroES system forms a nano-cage that allows encapsulation of the non-native substrate proteins and provides a physical environment optimized to promote and accelerate protein folding. The chain is Chaperonin GroEL from Mycoplasmoides gallisepticum (strain R(low / passage 15 / clone 2)) (Mycoplasma gallisepticum).